The primary structure comprises 391 residues: Heme A synthase (391 aa).

The next 8 membrane-spanning stretches (helical) occupy residues 37–57, 121–141, 152–172, 186–206, 229–249, 298–318, 332–352, and 354–374; these read IRLW…VGGL, RQLG…FLAA, LLAL…MVAS, LATH…QALL, TTVL…VAGI, FLHR…WIFG, LLAM…LSAA, and WQVA…ILHA. His300 contacts heme. Position 360 (His360) interacts with heme.

Belongs to the COX15/CtaA family. Type 2 subfamily. Interacts with CtaB. Heme b serves as cofactor.

The protein resides in the cell membrane. The catalysed reaction is Fe(II)-heme o + 2 A + H2O = Fe(II)-heme a + 2 AH2. It participates in porphyrin-containing compound metabolism; heme A biosynthesis; heme A from heme O: step 1/1. Functionally, catalyzes the conversion of heme O to heme A by two successive hydroxylations of the methyl group at C8. The first hydroxylation forms heme I, the second hydroxylation results in an unstable dihydroxymethyl group, which spontaneously dehydrates, resulting in the formyl group of heme A. This chain is Heme A synthase, found in Cereibacter sphaeroides (strain ATCC 17023 / DSM 158 / JCM 6121 / CCUG 31486 / LMG 2827 / NBRC 12203 / NCIMB 8253 / ATH 2.4.1.) (Rhodobacter sphaeroides).